We begin with the raw amino-acid sequence, 1204 residues long: E3 ubiquitin-protein ligase DZIP3 (1204 aa).

Disordered stretches follow at residues 1-22 (MDSL…QTKE) and 640-681 (SIPS…EQVS). Basic and acidic residues predominate over residues 649 to 658 (SVKDLQEVKS). A compositionally biased stretch (basic residues) spans 659 to 668 (KTKKKKRTKS). Coiled-coil stretches lie at residues 746–861 (KETE…TSRA) and 906–941 (QLKA…KVKQ). The segment covering 1088–1098 (PKKSESEEKSA) has biased composition (basic and acidic residues). Residues 1088–1141 (PKKSESEEKSAQDGNNASPSHTASQPNAPQDPKSAQGSATWEGDKDMDNEEEEE) are disordered. Positions 1099–1126 (QDGNNASPSHTASQPNAPQDPKSAQGSA) are enriched in polar residues. The span at 1132–1141 (KDMDNEEEEE) shows a compositional bias: acidic residues. The segment at 1144-1184 (CVICHENLSPENLSVLPCAHKFHSQCIRPWLMQQGTCPTCR) adopts an RING-type; atypical zinc-finger fold.

In terms of assembly, probably interacts with DAZL.

Its subcellular location is the cytoplasm. It catalyses the reaction S-ubiquitinyl-[E2 ubiquitin-conjugating enzyme]-L-cysteine + [acceptor protein]-L-lysine = [E2 ubiquitin-conjugating enzyme]-L-cysteine + N(6)-ubiquitinyl-[acceptor protein]-L-lysine.. It functions in the pathway protein modification; protein ubiquitination. In terms of biological role, E3 Ubiquitin ligase proteins mediate ubiquitination and subsequent proteasomal degradation of target proteins. E3 ubiquitin ligases accept ubiquitin from an E2 ubiquitin-conjugating enzyme in the form of a thioester and then directly transfers the ubiquitin to targeted substrates. Able to specifically bind RNA. The protein is E3 ubiquitin-protein ligase DZIP3 (Dzip3) of Mus musculus (Mouse).